The sequence spans 338 residues: MIVLGIESSCDDCCAAIVEDGVKILSNIKLSQKEHKKYYGVVPEIASRLHTEFIMSVCQKAITNAQIHASEIDLIAVTSKPGLIGSLIVGINFAKGLSIALKKPLICIDHILGHLYAPLMTIKIEYPFLSLILSGGHTILAKQNDFDDIEILGRTLDDACGEAFDKVAKHYKMGFPGGPNIEKLAKCGNQYAFNFPITIFDKKENRYDFSYSGLKTACIHQLEKFKDKNENITNNNIAASFQRVAFENLIIPIKRAIKDTNIKKLIISGGVASNLYLREKIKNLEVETYYPPIDLCTDNGAMIAGIGYLMYLKYGASPIETDANSRIENYKYTKGAKL.

Fe cation contacts are provided by H110 and H114. Substrate contacts are provided by residues 132 to 136, D165, G178, and N274; that span reads ILSGG. D298 is a Fe cation binding site.

Belongs to the KAE1 / TsaD family. The cofactor is Fe(2+).

It is found in the cytoplasm. The catalysed reaction is L-threonylcarbamoyladenylate + adenosine(37) in tRNA = N(6)-L-threonylcarbamoyladenosine(37) in tRNA + AMP + H(+). Its function is as follows. Required for the formation of a threonylcarbamoyl group on adenosine at position 37 (t(6)A37) in tRNAs that read codons beginning with adenine. Is involved in the transfer of the threonylcarbamoyl moiety of threonylcarbamoyl-AMP (TC-AMP) to the N6 group of A37, together with TsaE and TsaB. TsaD likely plays a direct catalytic role in this reaction. The protein is tRNA N6-adenosine threonylcarbamoyltransferase of Borrelia hermsii (strain HS1 / DAH).